A 586-amino-acid polypeptide reads, in one-letter code: Urease subunit alpha (586 aa).

The 453-residue stretch at 134–586 (GAIDTHIHFI…LPMAQRYFLF (453 aa)) folds into the Urease domain. Ni(2+) is bound by residues H139, H141, and K222. K222 bears the N6-carboxylysine mark. Residue H224 coordinates substrate. Ni(2+) contacts are provided by H251 and H277. Catalysis depends on H325, which acts as the Proton donor. D365 lines the Ni(2+) pocket.

Belongs to the metallo-dependent hydrolases superfamily. Urease alpha subunit family. As to quaternary structure, heterotrimer of UreA (gamma), UreB (beta) and UreC (alpha) subunits. Three heterotrimers associate to form the active enzyme. Ni cation serves as cofactor. Post-translationally, carboxylation allows a single lysine to coordinate two nickel ions.

The protein resides in the cytoplasm. It catalyses the reaction urea + 2 H2O + H(+) = hydrogencarbonate + 2 NH4(+). It participates in nitrogen metabolism; urea degradation; CO(2) and NH(3) from urea (urease route): step 1/1. The protein is Urease subunit alpha of Gloeothece citriformis (strain PCC 7424) (Cyanothece sp. (strain PCC 7424)).